Reading from the N-terminus, the 521-residue chain is Cytochrome P450 1A1 (521 aa).

Phe229 contributes to the substrate binding site. Heme is bound at residue Cys463.

It belongs to the cytochrome P450 family. Heme is required as a cofactor.

It is found in the endoplasmic reticulum membrane. The protein localises to the microsome membrane. It catalyses the reaction an organic molecule + reduced [NADPH--hemoprotein reductase] + O2 = an alcohol + oxidized [NADPH--hemoprotein reductase] + H2O + H(+). Its function is as follows. Cytochromes P450 are a group of heme-thiolate monooxygenases. They oxidize a variety of structurally unrelated compounds, including steroids, fatty acids, and xenobiotics. This Chelon auratus (Golden grey mullet) protein is Cytochrome P450 1A1 (cyp1a1).